A 633-amino-acid polypeptide reads, in one-letter code: Probable methyltransferase PMT17 (633 aa).

The Cytoplasmic segment spans residues 1 to 18 (MAKENSGHHHQTEARRKK). Residues 19–39 (LTLILGVSGLCILFYVLGAWQ) form a helical; Signal-anchor for type II membrane protein membrane-spanning segment. Over 40–633 (ANTVPSSISK…NNNNNNNNNN (594 aa)) the chain is Lumenal. The interval 50-71 (LGCETQSNPSSSSSSSSSSESA) is disordered. Residues 59-70 (SSSSSSSSSSES) show a composition bias toward low complexity. The N-linked (GlcNAc...) asparagine glycan is linked to Asn87.

Belongs to the methyltransferase superfamily.

Its subcellular location is the endoplasmic reticulum membrane. The protein is Probable methyltransferase PMT17 of Arabidopsis thaliana (Mouse-ear cress).